Here is a 168-residue protein sequence, read N- to C-terminus: MSMTVEQMTKVFRLVMDDVELNRLLYYKTDPLSPSHPDVQSLENYYDSTNDSPAIINTIFKRAPKTDDLSDSPLCRMCIYLGNALPKPTNQSFMLLNQELMIDVYTHINTFEISEYRSLKIIDRVSKLFFNKNIAGFGVTVDYKRLLISNPPDGYLGYKMIFTFGASK.

The polypeptide is SPbeta prophage-derived uncharacterized protein YomW (yomW) (Bacillus subtilis (strain 168)).